We begin with the raw amino-acid sequence, 794 residues long: Protocadherin beta-6 (794 aa).

An N-terminal signal peptide occupies residues 1-27 (MMQTKVQNKKRQVAFFILLMLWGEVGS). Residues 28–688 (ESIQYSVLEE…AQADSLTVYL (661 aa)) are Extracellular-facing. 5 consecutive Cadherin domains span residues 34-132 (VLEE…APEF), 137-241 (MLLK…VPEF), 246-345 (YEAQ…APEL), 350-449 (FISL…APAF), and 454-559 (YTLF…SPFV). The N-linked (GlcNAc...) asparagine glycan is linked to N46. A disulfide bridge connects residues C95 and C101. Residue N183 is glycosylated (N-linked (GlcNAc...) asparagine). N416 carries an N-linked (GlcNAc...) asparagine glycan. A glycan (N-linked (GlcNAc...) asparagine) is linked at N565. In terms of domain architecture, Cadherin 6 spans 566–669 (GSAPCTELVP…LVDGFSQPYL (104 aa)). Residues 689–709 (VVALASVSSLFLFSVLLFVAV) form a helical membrane-spanning segment. Residues 710–794 (RLCRRSRAAS…PTSRNSFPFS (85 aa)) lie on the Cytoplasmic side of the membrane. The segment at 773 to 794 (PPQGTEREMEETPTSRNSFPFS) is disordered. Over residues 784-794 (TPTSRNSFPFS) the composition is skewed to polar residues.

As to quaternary structure, forms homodimers in trans (molecules expressed by two different cells). Forms promiscuous heterodimers in cis (at the plasma membrane of the same cell) with other protocadherins.

The protein localises to the cell membrane. Calcium-dependent cell-adhesion protein involved in cells self-recognition and non-self discrimination. Thereby, it is involved in the establishment and maintenance of specific neuronal connections in the brain. The polypeptide is Protocadherin beta-6 (Homo sapiens (Human)).